Here is a 332-residue protein sequence, read N- to C-terminus: MRKPVRIGVLGCASFAWRRMLPAMCDVAETEVVAVASRDPAKAERFAARFECEAVLGYQRLLERPDIDAVYVPLPPGMHAEWIGKALEADKHVLAEKPLTTTASDTARLVGLARRKNLLLRENYLFLHHGRHDVVRDLLQSGEIGELREFTAVFGIPPLPDTDIRYRTELGGGALLDIGVYPARAARHFLLGPLTVLGASSHEAQESGVDLSGSVLLQSEGGTVAHLGYGFVHHYRSAYELWGSRGRIVVDRAFTPPAEWQAVIRIERKGVVDELSLPAEDQVRKAVTAFARDIRAGTGVDDPAVAGDSGESMIQQAALVEAIGQARRCGST.

12–18 serves as a coordination point for NADP(+); that stretch reads CASFAWR. A substrate-binding site is contributed by Arg19. NADP(+)-binding positions include 37 to 38, Tyr58, Leu74, and His79; that span reads SR. Lys97 serves as the catalytic Proton donor. Residues Arg165 and Asp177 each coordinate NADP(+). Substrate contacts are provided by Tyr235 and Thr255.

This sequence belongs to the Gfo/Idh/MocA family. In terms of assembly, monomer.

The catalysed reaction is dTDP-4-dehydro-2,6-dideoxy-alpha-D-glucose + NADP(+) = dTDP-3,4-didehydro-2,6-dideoxy-alpha-D-glucose + NADPH + H(+). In terms of biological role, involved in the biosynthesis of forosamine ((4-dimethylamino)-2,3,4,6-tetradeoxy-alpha-D-threo-hexopyranose), a highly deoxygenated sugar component of several bioactive natural products such as the insecticidal spinosyns A and D. Catalyzes the reduction of the C-3 keto moiety of dTDP-3,4-diketo-2,6-dideoxy-alpha-D-glucose to yield dTDP-4-keto-2,6-dideoxy-alpha-D-glucose. NADPH is the better reductant, however NADH can also be used. In Saccharopolyspora spinosa, this protein is dTDP-3,4-didehydro-2,6-dideoxy-alpha-D-glucose 3-reductase.